The primary structure comprises 306 residues: OVARIAN TUMOR DOMAIN-containing deubiquitinating enzyme 1 (306 aa).

Positions 81–295 constitute an OTU domain; that stretch reads IGIRRTRGDG…PGHYDILYPK (215 aa). The active site involves D89. C92 serves as the catalytic Nucleophile. Active-site residues include H259 and H288.

It belongs to the peptidase C65 family.

The enzyme catalyses Thiol-dependent hydrolysis of ester, thioester, amide, peptide and isopeptide bonds formed by the C-terminal Gly of ubiquitin (a 76-residue protein attached to proteins as an intracellular targeting signal).. With respect to regulation, cleavage activities for 'Lys-48'- and 'Lys-63'-linked ubiquitin (UB) tetramers is inhibited by UB aldehyde and N-ethylmaleimide but not by the metalloprotease inhibitors 1,10-phenanthroline and EDTA, and the serine protease inhibitor phenylmethylsulfonyl fluoride. Its function is as follows. Hydrolase that can remove conjugated ubiquitin from proteins in vitro and may therefore play an important regulatory role at the level of protein turnover by preventing degradation. Cysteine protease with a preference for Met-1 and 'Lys-48' over 'Lys-63'-linked ubiquitin (UB) tetramers (e.g. Ub2, Ub3 and Ub4) as substrates. The protein is OVARIAN TUMOR DOMAIN-containing deubiquitinating enzyme 1 of Arabidopsis thaliana (Mouse-ear cress).